Consider the following 146-residue polypeptide: MKLNELSPPKGARTARKRKGRGPGSGLGKTAGKGHKGQKARSGGGVRPGFEGGQMPVHRRLPKRGFCNIFAKKIAAVNVRDLARFEADSVVDAAALREARLISGKVDGVKILGHGEITQALTVKADQWSESAKEKIEKAGGKIEAA.

Positions 1-58 (MKLNELSPPKGARTARKRKGRGPGSGLGKTAGKGHKGQKARSGGGVRPGFEGGQMPVH) are disordered. Composition is skewed to gly residues over residues 22–31 (GPGSGLGKTA) and 42–52 (SGGGVRPGFEG).

It belongs to the universal ribosomal protein uL15 family. Part of the 50S ribosomal subunit.

Binds to the 23S rRNA. This Desulfatibacillum aliphaticivorans protein is Large ribosomal subunit protein uL15.